We begin with the raw amino-acid sequence, 318 residues long: Taste receptor type 2 member 60 (318 aa).

Topologically, residues 1 to 7 (MNGDHMV) are extracellular. Residues 8 to 28 (LGSSVTDKKAIILVTILLLLR) form a helical membrane-spanning segment. The Cytoplasmic segment spans residues 29–40 (LVAIAGNGFITA). A helical transmembrane segment spans residues 41-61 (ALGVEWVLRRMLLPCDKLLVS). Residues 62–88 (LGASRFCLQSVVMGKTIYVFLHPMAFP) lie on the Extracellular side of the membrane. The helical transmembrane segment at 89–109 (YNPVLQFLAFQWDFLNAATLW) threads the bilayer. The Cytoplasmic segment spans residues 110-128 (SSTWLSVFYCVKIATFTHP). A helical membrane pass occupies residues 129–149 (VFFWLKHKLSGWLPWMLFSSV). The Extracellular portion of the chain corresponds to 150 to 183 (GLSSFTTILFFIGNHRMYQNYLRNHLQPWNVTGD). Asparagine 179 carries N-linked (GlcNAc...) asparagine glycosylation. A helical membrane pass occupies residues 184 to 204 (SIRSYCEKFYLFPLKMITWTM). The Cytoplasmic segment spans residues 205-234 (PTAVFFICMILLITSLGRHRKKALLTTSGF). A helical membrane pass occupies residues 235–255 (REPSVQAHIKALLALLSFAML). At 256–264 (FISYFLSLV) the chain is on the extracellular side. Residues 265–285 (FSAAGIFPPLDFKFWVWESVI) form a helical membrane-spanning segment. Residues 286–318 (YLCAAVHPIILLFSNCRLRAVLKSRRSSRCGTP) lie on the Cytoplasmic side of the membrane.

It belongs to the G-protein coupled receptor T2R family. As to expression, expressed in subsets of taste receptor cells of the tongue and exclusively in gustducin-positive cells.

It localises to the membrane. In terms of biological role, receptor that may play a role in the perception of bitterness and is gustducin-linked. May play a role in sensing the chemical composition of the gastrointestinal content. The activity of this receptor may stimulate alpha gustducin, mediate PLC-beta-2 activation and lead to the gating of TRPM5. This is Taste receptor type 2 member 60 (TAS2R60) from Homo sapiens (Human).